The sequence spans 1049 residues: Tegument protein pp150 (1049 aa).

Disordered regions lie at residues 397–549 (EERQ…DPRF) and 659–945 (PFRM…YPAV). Acidic residues predominate over residues 428–439 (ADEDDDDDDDDE). Residues 452–462 (SGKGAASGGGV) show a composition bias toward gly residues. Positions 463-474 (SSIFSGLLSSGS) are enriched in low complexity. A compositionally biased stretch (polar residues) spans 475 to 490 (QKPTSGPLNIPQQQQR). The segment covering 509-525 (VRRDSAWDVRPLTETRG) has biased composition (basic and acidic residues). Residues 672–688 (TVSTTPRRPSTPRAAVT) are compositionally biased toward low complexity. Positions 710 to 722 (PVEDSEEEDDDSS) are enriched in acidic residues. Over residues 731-743 (GHTTPSSDYNNDV) the composition is skewed to polar residues. Residues 745-757 (SPPSQTPEQSTPS) are compositionally biased toward low complexity. Polar residues-rich tracts occupy residues 766–776 (SPMTTTSTSQK), 791–800 (RAQTVTSTPV), and 808–835 (VSGT…SRNV). Composition is skewed to low complexity over residues 836 to 855 (TSGA…ASAS), 866 to 884 (SPAT…SPAK), 912 to 928 (VVGR…APGR), and 936 to 945 (ASTTPTYPAV). Serine 922 carries an O-linked (GlcNAc) serine; by host glycan. Serine 953 carries O-linked (GlcNAc) serine; by host glycosylation. The interval 1006–1032 (DLSSPQKSGTGPQPGSAGMGGAKTPSD) is disordered. Polar residues predominate over residues 1008–1018 (SSPQKSGTGPQ).

The protein belongs to the herpesviridae large structural phosphoprotein family. In terms of assembly, interacts with host BICD1 and RAB6A. Interacts with small capsid protein UL48A; this interaction links together the capsid and pp150. Interacts with host CCNA2. Phosphorylated by host CCNA2.

The protein localises to the virion tegument. It is found in the host cytoplasm. Its subcellular location is the host nucleus. Its function is as follows. Participates in the last steps of viral maturation and release. Associates with nuclear capsids prior to DNA encapsidation and later preserves the integrity of nucleocapsids through secondary envelopment at the assembly compartment. Interacts with host CCNA2 and thereby blocks the onset of lytic gene expression to promote establishment of a quiescent state of infection in undifferentiated cells. In Homo sapiens (Human), this protein is Tegument protein pp150 (UL32).